The chain runs to 200 residues: Large ribosomal subunit protein uL4 (200 aa).

Residues 43 to 71 form a disordered region; that stretch reads RAQKTRAEVSGSGKKPWRQKGTGRARSGD.

It belongs to the universal ribosomal protein uL4 family. In terms of assembly, part of the 50S ribosomal subunit.

In terms of biological role, one of the primary rRNA binding proteins, this protein initially binds near the 5'-end of the 23S rRNA. It is important during the early stages of 50S assembly. It makes multiple contacts with different domains of the 23S rRNA in the assembled 50S subunit and ribosome. Forms part of the polypeptide exit tunnel. The protein is Large ribosomal subunit protein uL4 of Mannheimia succiniciproducens (strain KCTC 0769BP / MBEL55E).